The chain runs to 207 residues: Mediator of RNA polymerase II transcription subunit 21 (207 aa).

The segment at 36–120 (IPPPDVPDAA…APDSPRTFAS (85 aa)) is disordered. Positions 91-108 (GEGAQTPGPAAGAGADPN) are enriched in low complexity. A coiled-coil region spans residues 146-194 (IDSSEAEQEKRIRELEGELRQVEEERELKMRELKRLRRTLENVLTAVET).

It belongs to the Mediator complex subunit 21 family. In terms of assembly, component of the Mediator complex.

The protein resides in the nucleus. Component of the Mediator complex, a coactivator involved in the regulated transcription of nearly all RNA polymerase II-dependent genes. Mediator functions as a bridge to convey information from gene-specific regulatory proteins to the basal RNA polymerase II transcription machinery. Mediator is recruited to promoters by direct interactions with regulatory proteins and serves as a scaffold for the assembly of a functional preinitiation complex with RNA polymerase II and the general transcription factors. This is Mediator of RNA polymerase II transcription subunit 21 (srb7) from Aspergillus fumigatus (strain ATCC MYA-4609 / CBS 101355 / FGSC A1100 / Af293) (Neosartorya fumigata).